The following is a 458-amino-acid chain: MFAKAQRVHFIGIGGIGMSGIAEIVLNLGYAVSGSDLRRTSITARLESLGVVLFEGHAAANVIGSGVVVVSSAIDEENPEVREARARKIPVIQRAEMLAELMRLKYGIAVAGMHGKTTTTSMIASVLAAGELDPTVVVGGRVDALGSNARLGNSHYLVAEADESDRSFLKLSPILTVVTNLDREHMDCYRDMADVEDAFLEFMNRVPFYGANVACIDNPQLAALLPRVRRRVFTYGTSLGADFVVRMLPPAPEVRSRFEIASAQSVLGPFDLHVPGIHNVLNAAAAVAIAVQLDLKEQAIVQGLKSFRGVDRRFQLKGVVDGITIIDDYGHHPTEIRATLRAARDCGYANIHVLFQPHRYSRTRDLLDEFVTSFADASTVEMLDIYAASEAPLPGITSAALVQSIGQPGVRYAASTEEAVTAILDRAAPGDLILTLGAGNVSQLAPLLVERLQSRLPA.

Residue Gly-112–Thr-118 participates in ATP binding.

The protein belongs to the MurCDEF family.

The protein resides in the cytoplasm. The enzyme catalyses UDP-N-acetyl-alpha-D-muramate + L-alanine + ATP = UDP-N-acetyl-alpha-D-muramoyl-L-alanine + ADP + phosphate + H(+). It participates in cell wall biogenesis; peptidoglycan biosynthesis. In terms of biological role, cell wall formation. In Acidobacterium capsulatum (strain ATCC 51196 / DSM 11244 / BCRC 80197 / JCM 7670 / NBRC 15755 / NCIMB 13165 / 161), this protein is UDP-N-acetylmuramate--L-alanine ligase.